Here is a 366-residue protein sequence, read N- to C-terminus: Carbamoyl phosphate synthase small chain (366 aa).

The CPSase stretch occupies residues 1 to 171 (MQSKRYLVLE…KTPYVSTGKD (171 aa)). L-glutamine is bound by residues S47, G221, and G223. Positions 173 to 360 (SVVLVDFGKK…VAMMTNFKEK (188 aa)) constitute a Glutamine amidotransferase type-1 domain. The Nucleophile role is filled by C248. Residues L249, Q252, N290, G292, and Y293 each contribute to the L-glutamine site. Active-site residues include H333 and E335.

The protein belongs to the CarA family. In terms of assembly, composed of two chains; the small (or glutamine) chain promotes the hydrolysis of glutamine to ammonia, which is used by the large (or ammonia) chain to synthesize carbamoyl phosphate. Tetramer of heterodimers (alpha,beta)4.

The catalysed reaction is hydrogencarbonate + L-glutamine + 2 ATP + H2O = carbamoyl phosphate + L-glutamate + 2 ADP + phosphate + 2 H(+). It carries out the reaction L-glutamine + H2O = L-glutamate + NH4(+). Its pathway is amino-acid biosynthesis; L-arginine biosynthesis; carbamoyl phosphate from bicarbonate: step 1/1. The protein operates within pyrimidine metabolism; UMP biosynthesis via de novo pathway; (S)-dihydroorotate from bicarbonate: step 1/3. Functionally, small subunit of the glutamine-dependent carbamoyl phosphate synthetase (CPSase). CPSase catalyzes the formation of carbamoyl phosphate from the ammonia moiety of glutamine, carbonate, and phosphate donated by ATP, constituting the first step of 2 biosynthetic pathways, one leading to arginine and/or urea and the other to pyrimidine nucleotides. The small subunit (glutamine amidotransferase) binds and cleaves glutamine to supply the large subunit with the substrate ammonia. This is Carbamoyl phosphate synthase small chain from Staphylococcus aureus (strain COL).